The sequence spans 701 residues: Polyribonucleotide nucleotidyltransferase (701 aa).

Residues D487 and D493 each coordinate Mg(2+). Positions 554-613 constitute a KH domain; the sequence is PTMLQMKIDSDKIRDVIGKGGATIRAICEETKASIDIEDDGSVKIYGETKEAAEAAKQRV. In terms of domain architecture, S1 motif spans 623–691; that stretch reads GKIYVGKVER…NRGRIKLSIK (69 aa).

The protein belongs to the polyribonucleotide nucleotidyltransferase family. As to quaternary structure, component of the RNA degradosome, which is a multiprotein complex involved in RNA processing and mRNA degradation. Mg(2+) serves as cofactor.

The protein resides in the cytoplasm. It carries out the reaction RNA(n+1) + phosphate = RNA(n) + a ribonucleoside 5'-diphosphate. In terms of biological role, involved in mRNA degradation. Catalyzes the phosphorolysis of single-stranded polyribonucleotides processively in the 3'- to 5'-direction. This chain is Polyribonucleotide nucleotidyltransferase, found in Pseudomonas paraeruginosa (strain DSM 24068 / PA7) (Pseudomonas aeruginosa (strain PA7)).